The following is a 432-amino-acid chain: Monooxygenase penA (432 aa).

Residues 7–29 (FKIAIIGAGPAGLTLASLLTASP) form a helical membrane-spanning segment. Asn33 carries N-linked (GlcNAc...) asparagine glycosylation.

Belongs to the aromatic-ring hydroxylase family. Requires FAD as cofactor.

It localises to the membrane. It participates in secondary metabolite biosynthesis. The protein operates within alkaloid biosynthesis. It functions in the pathway mycotoxin biosynthesis. In terms of biological role, monooxygenase; part of the gene cluster that mediates the biosynthesis of penigequinolones, potent insecticidal alkaloids that contain a highly modified 10-carbon prenyl group. The first stage is catalyzed by the nonribosomal peptide synthetase penN that condenses anthranilic acid and O-methyl-L-tyrosine to produce 4'-methoxycyclopeptin. 4'-methoxycyclopeptin is then converted to 4'-methoxydehydrocyclopeptin by the ketoglutarate-dependent dioxygenase penM through dehydrogenation to form a double bond between C-alpha and C-beta of the O-methyltyrosine side chain. PenM also converts its first product methoxydehydrocyclopeptin to 4'-methoxycyclopenin. The following conversion of 4'methoxycyclopenin into 4'-methoxyviridicatin is catalyzed by the cyclopenase penL. 4'-methoxyviridicatin is the precursor of quinolone natural products, and is further converted to quinolinone B. The prenyltransferase penI then catalyzes the canonical Friedel-Crafts alkylation of quinolinone B with dimethylallyl cation to yield dimethylallyl quinolone, which is subjected to FAD-dependent dehydrogenation by the FAD-linked oxidoreductase penH to yield conjugated aryl diene. The delta(3') double bond then serves as the site of the second alkylation with DMAPP catalyzed by the prenyltransferase penG to yield a carbenium ion intermediate, which can be attacked by H(2)O to yield a styrenyl quinolone containing a C3'-hydroxyprenyl chain, or undergo cyclization to yield yaequinolones J1 and J2. The conversion of the styrenyl quinolone into the tetrahydrofuran-containing yaequinolone C is performed by the FAD-dependent monooxygenase penE and involves epoxidation of the terminal C7'-C8' olefin, followed by epoxide ring opening initiated by the C3' hydroxyl group. The predicted cysteine hydrolase penJ acts as an epoxide hydrolase that enhances the rate of the 5-exo-tet cyclization step, increasing the yield of yaequinolone C. PenF catalyzes the cationic rearrangement of the epoxide formed by penE (before ring opening to produce yaequinolone C) into yaequinolone D. Finally, the short-chain dehydrogenase/reductase (SDR)-like reductase penD, catalyzes both the dehydration of yaequinolone D and the reduction of the resulting oxonium to yield penigequinolone. The polypeptide is Monooxygenase penA (Penicillium thymicola).